The following is a 406-amino-acid chain: Argininosuccinate synthase (406 aa).

Ala-8–Ser-16 provides a ligand contact to ATP. Tyr-86 is an L-citrulline binding site. Gly-116 is a binding site for ATP. L-aspartate contacts are provided by Thr-118, Asn-122, and Asp-123. Asn-122 contacts L-citrulline. L-citrulline is bound by residues Arg-126, Ser-174, Glu-259, and Tyr-271.

It belongs to the argininosuccinate synthase family. Type 1 subfamily. As to quaternary structure, homotetramer.

It localises to the cytoplasm. It catalyses the reaction L-citrulline + L-aspartate + ATP = 2-(N(omega)-L-arginino)succinate + AMP + diphosphate + H(+). It participates in amino-acid biosynthesis; L-arginine biosynthesis; L-arginine from L-ornithine and carbamoyl phosphate: step 2/3. This is Argininosuccinate synthase from Lacticaseibacillus paracasei (strain ATCC 334 / BCRC 17002 / CCUG 31169 / CIP 107868 / KCTC 3260 / NRRL B-441) (Lactobacillus paracasei).